The sequence spans 368 residues: Homoserine O-acetyltransferase (368 aa).

An AB hydrolase-1 domain is found at 41–352 (NVILITHALS…DYGHDSFLVE (312 aa)). Serine 147 acts as the Nucleophile in catalysis. Arginine 219 contributes to the substrate binding site. Active-site residues include aspartate 313 and histidine 346. Aspartate 347 contributes to the substrate binding site.

It belongs to the AB hydrolase superfamily. MetX family. Homodimer.

The protein localises to the cytoplasm. The catalysed reaction is L-homoserine + acetyl-CoA = O-acetyl-L-homoserine + CoA. It functions in the pathway amino-acid biosynthesis; L-methionine biosynthesis via de novo pathway; O-acetyl-L-homoserine from L-homoserine: step 1/1. Functionally, transfers an acetyl group from acetyl-CoA to L-homoserine, forming acetyl-L-homoserine. This Nautilia profundicola (strain ATCC BAA-1463 / DSM 18972 / AmH) protein is Homoserine O-acetyltransferase.